The following is a 473-amino-acid chain: Aspartyl/glutamyl-tRNA(Asn/Gln) amidotransferase subunit B (473 aa).

This sequence belongs to the GatB/GatE family. GatB subfamily. As to quaternary structure, heterotrimer of A, B and C subunits.

The catalysed reaction is L-glutamyl-tRNA(Gln) + L-glutamine + ATP + H2O = L-glutaminyl-tRNA(Gln) + L-glutamate + ADP + phosphate + H(+). It carries out the reaction L-aspartyl-tRNA(Asn) + L-glutamine + ATP + H2O = L-asparaginyl-tRNA(Asn) + L-glutamate + ADP + phosphate + 2 H(+). Functionally, allows the formation of correctly charged Asn-tRNA(Asn) or Gln-tRNA(Gln) through the transamidation of misacylated Asp-tRNA(Asn) or Glu-tRNA(Gln) in organisms which lack either or both of asparaginyl-tRNA or glutaminyl-tRNA synthetases. The reaction takes place in the presence of glutamine and ATP through an activated phospho-Asp-tRNA(Asn) or phospho-Glu-tRNA(Gln). This is Aspartyl/glutamyl-tRNA(Asn/Gln) amidotransferase subunit B from Levilactobacillus brevis (strain ATCC 367 / BCRC 12310 / CIP 105137 / JCM 1170 / LMG 11437 / NCIMB 947 / NCTC 947) (Lactobacillus brevis).